The sequence spans 153 residues: Endoribonuclease YbeY (153 aa).

Zn(2+) contacts are provided by His-114, His-118, and His-124.

Belongs to the endoribonuclease YbeY family. Requires Zn(2+) as cofactor.

The protein localises to the cytoplasm. Functionally, single strand-specific metallo-endoribonuclease involved in late-stage 70S ribosome quality control and in maturation of the 3' terminus of the 16S rRNA. This chain is Endoribonuclease YbeY, found in Finegoldia magna (strain ATCC 29328 / DSM 20472 / WAL 2508) (Peptostreptococcus magnus).